The primary structure comprises 273 residues: 4-hydroxy-tetrahydrodipicolinate reductase (273 aa).

Residues 12 to 17 (GAGGRM) and E38 each bind NAD(+). NADP(+) is bound at residue R39. NAD(+) contacts are provided by residues 102–104 (GTT) and 126–129 (AANF). The active-site Proton donor/acceptor is the H159. H160 serves as a coordination point for (S)-2,3,4,5-tetrahydrodipicolinate. K163 functions as the Proton donor in the catalytic mechanism. 169–170 (GT) contacts (S)-2,3,4,5-tetrahydrodipicolinate.

The protein belongs to the DapB family. As to quaternary structure, homotetramer.

The protein resides in the cytoplasm. It catalyses the reaction (S)-2,3,4,5-tetrahydrodipicolinate + NAD(+) + H2O = (2S,4S)-4-hydroxy-2,3,4,5-tetrahydrodipicolinate + NADH + H(+). It carries out the reaction (S)-2,3,4,5-tetrahydrodipicolinate + NADP(+) + H2O = (2S,4S)-4-hydroxy-2,3,4,5-tetrahydrodipicolinate + NADPH + H(+). Its pathway is amino-acid biosynthesis; L-lysine biosynthesis via DAP pathway; (S)-tetrahydrodipicolinate from L-aspartate: step 4/4. Catalyzes the conversion of 4-hydroxy-tetrahydrodipicolinate (HTPA) to tetrahydrodipicolinate. This Salmonella arizonae (strain ATCC BAA-731 / CDC346-86 / RSK2980) protein is 4-hydroxy-tetrahydrodipicolinate reductase.